We begin with the raw amino-acid sequence, 397 residues long: Acetate kinase (397 aa).

A Mg(2+)-binding site is contributed by Asn-7. Lys-14 lines the ATP pocket. Arg-90 contacts substrate. The active-site Proton donor/acceptor is the Asp-147. ATP is bound by residues 207–211 (HLGNG), 282–284 (DFR), and 330–334 (GLGEN). Mg(2+) is bound at residue Glu-383.

Belongs to the acetokinase family. As to quaternary structure, homodimer. The cofactor is Mg(2+). Mn(2+) serves as cofactor.

It localises to the cytoplasm. The catalysed reaction is acetate + ATP = acetyl phosphate + ADP. It functions in the pathway metabolic intermediate biosynthesis; acetyl-CoA biosynthesis; acetyl-CoA from acetate: step 1/2. In terms of biological role, catalyzes the formation of acetyl phosphate from acetate and ATP. Can also catalyze the reverse reaction. The protein is Acetate kinase of Clostridium botulinum (strain Kyoto / Type A2).